The primary structure comprises 298 residues: 33 kDa chaperonin (298 aa).

2 disulfide bridges follow: cysteine 237/cysteine 239 and cysteine 270/cysteine 273.

Belongs to the HSP33 family. Under oxidizing conditions two disulfide bonds are formed involving the reactive cysteines. Under reducing conditions zinc is bound to the reactive cysteines and the protein is inactive.

The protein localises to the cytoplasm. Redox regulated molecular chaperone. Protects both thermally unfolding and oxidatively damaged proteins from irreversible aggregation. Plays an important role in the bacterial defense system toward oxidative stress. In Enterococcus faecalis (strain ATCC 700802 / V583), this protein is 33 kDa chaperonin.